The chain runs to 153 residues: uncharacterized protein (153 aa).

2 disordered regions span residues 30–66 (GPTVDTKRQELPILSEDSDGSDKEDEQPQVVVLRKGD) and 79–153 (IKEN…DYDD). Over residues 45–56 (EDSDGSDKEDEQ) the composition is skewed to acidic residues. 2 stretches are compositionally biased toward polar residues: residues 106 to 116 (GDTTSGVNACS) and 130 to 144 (GTKSSQKQVKNSSLL).

This is an uncharacterized protein from Xenopus laevis (African clawed frog).